Reading from the N-terminus, the 265-residue chain is MRILVTNDDGIDALGIKRLVEALLTLEGAEVSIVAPVEEKSGVGHGITYRSALSPEQRDFYGMPVKAWAVNGNPADCVKAAYHLLFEHGKKPDIVFSGINVGTNLGRDIYYSGTCSGAREAVILGVPGVALSYDNWFDQDNYGDVVEMIRPLVKEFSDRAIKGELASEVFWNINIPHVPLAEVKGMVPATLSMNHYEDKYSEEAEGYYLAREYPQVMPLAEPLDYDLLKHGYIAITPVHIDATDRTLLKQMDNWALLKAWGKQEE.

Aspartate 8, aspartate 9, serine 41, and asparagine 100 together coordinate a divalent metal cation.

Belongs to the SurE nucleotidase family. A divalent metal cation serves as cofactor.

The protein resides in the cytoplasm. It catalyses the reaction a ribonucleoside 5'-phosphate + H2O = a ribonucleoside + phosphate. Functionally, nucleotidase that shows phosphatase activity on nucleoside 5'-monophosphates. The chain is 5'-nucleotidase SurE from Brevibacillus brevis (strain 47 / JCM 6285 / NBRC 100599).